Here is a 961-residue protein sequence, read N- to C-terminus: Retinoblastoma-like protein homolog lin-35 (961 aa).

2 disordered regions span residues 1 to 43 (MPKR…PPAK) and 55 to 129 (GGVQ…TPPP). A compositionally biased stretch (polar residues) spans 68–81 (ELTQMTIKQETEGN). Residues 107–119 (GEDDDYEEDDADS) show a composition bias toward acidic residues. Phosphoserine; by CDK4 is present on Ser714. Residue Thr719 is modified to Phosphothreonine; by CDK4.

It belongs to the retinoblastoma protein (RB) family. In terms of assembly, component of the DRM complex, at least composed of lin-9, lin-35, lin-37, lin-52, lin-53, lin-54, dpl-1 and efl-1. Interacts with lin-53. Interacts (via C-terminus) with dpl-1 (via C-terminus) and efl-1 (via C-terminus). Interacts (via C-terminus) with lin-8. Post-translationally, phosphorylated by the cyclin dependent kinase cdk-4. Phosphorylation inhibits the transcriptional repressor activity of lin-35 and allows for progression through the G1 phase of the cell cycle during postembryonic development.

It is found in the nucleus. Its function is as follows. Key regulator of cell division which acts as a transcriptional repressor and negatively regulates cell cycle progression in its active unphosphorylated form, but allows cell cycle progression when phosphorylated. When unphosphorylated and in its active form, interacts with E2F transcription factors such as efl-1 to repress their transcriptional activity and negatively regulate the progression through the G1 phase of the cell cycle during postembryonic development. May furthermore act with cell cycle regulator cki-1 to negatively regulate cell cycle progression. Acts redundantly with lin-53, fzr-1 and lin-23 to control cell cycle progression by regulating the expression of G1 phase cyclins. In particular, negatively regulates the expression of the cyclin E homolog cye-1, which is essential for the G1/S phase transition. Regulates cell division in the intestinal lineage, repressing the expression of genes such as cdc-25.2, which are required for intestinal cells to transition from the karyokinesis cell cycle (also known as nuclear division) to endoreplication, a specific growth pathway in the intestinal epithelium required for feeding and gut development in growing larvae during the L1 stage molt. Its role as a transcriptional repressor in the regulation of intestinal cell division during postembryonic development is most likely in complex with an E2F cell cycle regulatory transcription factor efl-1 and its binding partner the synthetic multivulva class B protein dpl-1. Synthetic multivulva (synMuv) class B protein. SynMuv proteins are required to repress the induction of vulval development by Ras signaling and probably act by forming the multiprotein DRM complex that represses transcription. Together with synMuv class B protein lin-53, and redundantly with synMuv class A protein lin-15A, represses transcription to control vulval development, most likely through antagonization of the Ras-signaling pathway in the major hypodermal syncytium hyp7. Acts redundantly with the transcriptional corepressor spr-1 and the zinc finger protein zfp-2 to play a role in vulval morphogenesis, promote germline proliferation and somatic gonad development. Acts redundantly with ubc-18 in the regulation of pharyngeal morphogenesis during embryonic development by negatively regulating the expression of proteins such as sup-35. Functions with the SWI/SNF complex and proteins such as pha-1 to regulate larval development. Functions redundantly with xnp-1 to regulate somatic gonad development. Acts redundantly with slr-2 to regulate the expression of intestinal genes required for nutrient utilization. Regulates transcription in response to starvation. Furthermore, in response to starvation, promotes germ cell programmed cell death by negatively regulating the expression of the anti-apoptotic protein ced-9. Conversely, in conjunction with mcd-1, efl-1 and the synthetic multivulva class B proteins dpl-1, lin-37 and lin-52, may also regulate transcription to promote programmed cell death independently of ced-1, ced-8 and ced-9 cell death pathways. Directly involved in heterochromatin formation by maintaining overall chromatin structure and, in particular, that of constitutive heterochromatin by stabilizing histone methylation. In particular, negatively regulates the expression of mes-4, a histone methyltransferase that controls the expression of germline specific genes. May play a role in double strand break formation during meiosis. May suppress sensitivity to RNAi. May play a role in the response to endoplasmic reticulum (ER) stress. This chain is Retinoblastoma-like protein homolog lin-35, found in Caenorhabditis elegans.